Here is a 294-residue protein sequence, read N- to C-terminus: NAD kinase (294 aa).

Aspartate 74 (proton acceptor) is an active-site residue. Residues 74–75, 148–149, arginine 159, arginine 176, aspartate 178, 189–194, and glutamine 247 contribute to the NAD(+) site; these read DG, ND, and TAYALS.

The protein belongs to the NAD kinase family. The cofactor is a divalent metal cation.

The protein localises to the cytoplasm. The enzyme catalyses NAD(+) + ATP = ADP + NADP(+) + H(+). Its function is as follows. Involved in the regulation of the intracellular balance of NAD and NADP, and is a key enzyme in the biosynthesis of NADP. Catalyzes specifically the phosphorylation on 2'-hydroxyl of the adenosine moiety of NAD to yield NADP. In Azoarcus sp. (strain BH72), this protein is NAD kinase.